Consider the following 380-residue polypeptide: 1-deoxy-D-xylulose 5-phosphate reductoisomerase (380 aa).

NADPH contacts are provided by Ser-10, Gly-11, Ser-12, Ile-13, Gly-36, Lys-37, Asn-38, and Asn-120. 1-deoxy-D-xylulose 5-phosphate is bound at residue Lys-121. Glu-122 contacts NADPH. Residue Asp-146 coordinates Mn(2+). 1-deoxy-D-xylulose 5-phosphate-binding residues include Ser-147, Glu-148, Ser-172, and His-195. Glu-148 is a Mn(2+) binding site. Gly-201 serves as a coordination point for NADPH. The 1-deoxy-D-xylulose 5-phosphate site is built by Ser-208, Asn-213, Lys-214, and Glu-217. Position 217 (Glu-217) interacts with Mn(2+).

The protein belongs to the DXR family. Mg(2+) serves as cofactor. It depends on Mn(2+) as a cofactor.

The catalysed reaction is 2-C-methyl-D-erythritol 4-phosphate + NADP(+) = 1-deoxy-D-xylulose 5-phosphate + NADPH + H(+). Its pathway is isoprenoid biosynthesis; isopentenyl diphosphate biosynthesis via DXP pathway; isopentenyl diphosphate from 1-deoxy-D-xylulose 5-phosphate: step 1/6. Functionally, catalyzes the NADPH-dependent rearrangement and reduction of 1-deoxy-D-xylulose-5-phosphate (DXP) to 2-C-methyl-D-erythritol 4-phosphate (MEP). This is 1-deoxy-D-xylulose 5-phosphate reductoisomerase from Bacillus cereus (strain AH187).